The chain runs to 238 residues: Ribosome-recycling factor, mitochondrial (238 aa).

It belongs to the RRF family.

Its subcellular location is the mitochondrion. Functionally, responsible for the release of ribosomes from messenger RNA at the termination of protein biosynthesis. May increase the efficiency of translation by recycling ribosomes from one round of translation to another. The protein is Ribosome-recycling factor, mitochondrial of Caenorhabditis elegans.